Here is a 154-residue protein sequence, read N- to C-terminus: Prefoldin subunit 5 (154 aa).

N-acetylalanine is present on Ala-2. Position 42 is an N6-acetyllysine (Lys-42). Ser-56 is subject to Phosphoserine.

Belongs to the prefoldin subunit alpha family. Heterohexamer of two PFD-alpha type and four PFD-beta type subunits. Binds to MYC; interacts with its N-terminal domain. As to expression, highly expressed in pancreas and skeletal muscle and moderately in other tissues.

The protein resides in the nucleus. Its subcellular location is the cytoplasm. In terms of biological role, binds specifically to cytosolic chaperonin (c-CPN) and transfers target proteins to it. Binds to nascent polypeptide chain and promotes folding in an environment in which there are many competing pathways for nonnative proteins. Represses the transcriptional activity of MYC. The protein is Prefoldin subunit 5 (PFDN5) of Homo sapiens (Human).